We begin with the raw amino-acid sequence, 160 residues long: 2-C-methyl-D-erythritol 2,4-cyclodiphosphate synthase (160 aa).

Positions 10 and 12 each coordinate a divalent metal cation. 4-CDP-2-C-methyl-D-erythritol 2-phosphate-binding positions include 10-12 (DVH) and 36-37 (HS). His-44 serves as a coordination point for a divalent metal cation. Residues 58 to 60 (DIG), 63 to 67 (FPDTD), and Arg-144 each bind 4-CDP-2-C-methyl-D-erythritol 2-phosphate.

This sequence belongs to the IspF family. Homotrimer. A divalent metal cation serves as cofactor.

The catalysed reaction is 4-CDP-2-C-methyl-D-erythritol 2-phosphate = 2-C-methyl-D-erythritol 2,4-cyclic diphosphate + CMP. The protein operates within isoprenoid biosynthesis; isopentenyl diphosphate biosynthesis via DXP pathway; isopentenyl diphosphate from 1-deoxy-D-xylulose 5-phosphate: step 4/6. In terms of biological role, involved in the biosynthesis of isopentenyl diphosphate (IPP) and dimethylallyl diphosphate (DMAPP), two major building blocks of isoprenoid compounds. Catalyzes the conversion of 4-diphosphocytidyl-2-C-methyl-D-erythritol 2-phosphate (CDP-ME2P) to 2-C-methyl-D-erythritol 2,4-cyclodiphosphate (ME-CPP) with a corresponding release of cytidine 5-monophosphate (CMP). This chain is 2-C-methyl-D-erythritol 2,4-cyclodiphosphate synthase, found in Dechloromonas aromatica (strain RCB).